The chain runs to 308 residues: Solute carrier family 25 member 47 (308 aa).

Solcar repeat units lie at residues 1–80, 93–206, and 215–302; these read MDFV…CLAH, PTKA…LCEW, and PDVP…VLRL. 6 consecutive transmembrane segments (helical) span residues 3 to 23, 49 to 69, 98 to 116, 190 to 210, 217 to 237, and 273 to 293; these read FVAG…LDTV, VWGF…VSSV, ITLS…TSPT, GHSF…LSPA, VPGV…VATP, and VLFK…MVVF.

This sequence belongs to the mitochondrial carrier (TC 2.A.29) family. In terms of tissue distribution, specifically expressed in liver.

It localises to the mitochondrion inner membrane. The protein resides in the mitochondrion outer membrane. It carries out the reaction NAD(+)(in) = NAD(+)(out). It catalyses the reaction acetyl-CoA(in) = acetyl-CoA(out). Functionally, mitochondrial NAD(+) transporter that acts as a 'metabolic gate' in hepatic lipogenesis. Provides NAD(+) substrate to mitochondrial SIRT3 deacetylase and enables its NAD(+)-dependent activities in mitochondrial energy metabolism. This triggers downstream activation of PRKAA1/AMPK-alpha signaling cascade that negatively regulates sterol regulatory element-binding protein (SREBP) transcriptional activities and ATP-consuming lipogenesis to restore cellular energy balance. May transport other mitochondrial metabolites having an aromatic nucleotide and phosphate groups, such as acetyl-CoA. Does not transport amino acids. The transport mechanism remains to be elucidated. This is Solute carrier family 25 member 47 from Homo sapiens (Human).